We begin with the raw amino-acid sequence, 104 residues long: Protein EPIDERMAL PATTERNING FACTOR 1 (104 aa).

Residues 1–20 (MKSLLLLAFFLSFFFGSLLA) form the signal peptide. Intrachain disulfides connect cysteine 60-cysteine 94, cysteine 64-cysteine 70, cysteine 67-cysteine 96, and cysteine 79-cysteine 88. Asparagine 98 is a glycosylation site (N-linked (GlcNAc...) asparagine).

It belongs to the plant cysteine rich small secretory peptide family. Epidermal patterning factor subfamily. As to quaternary structure, interacts with ERECTA and ERL1, but not with TMM. Expressed in shoots, but not in roots. Mostly localized in developing leaves, specifically in meristemoids, guard mother cells (GMCs), and young guard cells.

The protein resides in the secreted. Its function is as follows. Controls stomatal patterning. Regulates asymmetric cell division during guard cell differentiation. Mediates stomatal development inhibition. Not cleaved by the protease CRSP (AC Q9LNU1). MEPF1: mobile signal controlling stomatal development in a non-cell-autonomous manner. Uses ERL1 as major receptor. May act by competing with somatogen (AC Q9SV72) for the same receptor, TMM (AC Q9SSD1). This is Protein EPIDERMAL PATTERNING FACTOR 1 from Arabidopsis thaliana (Mouse-ear cress).